We begin with the raw amino-acid sequence, 475 residues long: Aspartyl/glutamyl-tRNA(Asn/Gln) amidotransferase subunit B (475 aa).

The protein belongs to the GatB/GatE family. GatB subfamily. Heterotrimer of A, B and C subunits.

It catalyses the reaction L-glutamyl-tRNA(Gln) + L-glutamine + ATP + H2O = L-glutaminyl-tRNA(Gln) + L-glutamate + ADP + phosphate + H(+). The enzyme catalyses L-aspartyl-tRNA(Asn) + L-glutamine + ATP + H2O = L-asparaginyl-tRNA(Asn) + L-glutamate + ADP + phosphate + 2 H(+). In terms of biological role, allows the formation of correctly charged Asn-tRNA(Asn) or Gln-tRNA(Gln) through the transamidation of misacylated Asp-tRNA(Asn) or Glu-tRNA(Gln) in organisms which lack either or both of asparaginyl-tRNA or glutaminyl-tRNA synthetases. The reaction takes place in the presence of glutamine and ATP through an activated phospho-Asp-tRNA(Asn) or phospho-Glu-tRNA(Gln). The sequence is that of Aspartyl/glutamyl-tRNA(Asn/Gln) amidotransferase subunit B from Staphylococcus aureus (strain bovine RF122 / ET3-1).